A 189-amino-acid polypeptide reads, in one-letter code: Peptidyl-tRNA hydrolase (189 aa).

Position 14 (tyrosine 14) interacts with tRNA. The Proton acceptor role is filled by histidine 19. Positions 61, 63, and 109 each coordinate tRNA.

The protein belongs to the PTH family. In terms of assembly, monomer.

It is found in the cytoplasm. It catalyses the reaction an N-acyl-L-alpha-aminoacyl-tRNA + H2O = an N-acyl-L-amino acid + a tRNA + H(+). Hydrolyzes ribosome-free peptidyl-tRNAs (with 1 or more amino acids incorporated), which drop off the ribosome during protein synthesis, or as a result of ribosome stalling. In terms of biological role, catalyzes the release of premature peptidyl moieties from peptidyl-tRNA molecules trapped in stalled 50S ribosomal subunits, and thus maintains levels of free tRNAs and 50S ribosomes. The polypeptide is Peptidyl-tRNA hydrolase (Sulfurovum sp. (strain NBC37-1)).